We begin with the raw amino-acid sequence, 326 residues long: Nine-heme cytochrome c (326 aa).

The N-terminal stretch at 1 to 30 is a signal peptide; that stretch reads MRNGTSLLLLAAIALAGAACLTAMGGTAKA. Heme-binding residues include H67, H70, C77, C80, H81, H82, C89, C92, H93, H111, C127, C130, H131, C141, C144, H145, C157, C160, H161, H227, H230, H248, C255, C258, H259, H260, C271, C274, H275, H294, C297, C300, H301, C314, C317, and H318.

In terms of assembly, monomer. In terms of processing, binds 9 heme groups per subunit.

It is found in the periplasm. Its function is as follows. May form part of a transmembrane redox complex through which electrons are transferred to the cytoplasm for reduction of sulfate. This is Nine-heme cytochrome c from Desulfovibrio desulfuricans (strain ATCC 27774 / DSM 6949 / MB).